The following is a 424-amino-acid chain: MKLEMICTGEEVLAGQIVDTNAAWFASTMMEHGVEIQRRVTVGDRLEDLIAVFQERSLHADVILVNGGLGPTSDDMSALAMAKAKGEPLVENVEWRERLEEWFTRNNREMPLSNLKQAMLPASAVMVDNPVGTACGFRVKLNRAWLFFTPGVPFELKHMVTEQFVPFIRDEFNLDSKVALKKLLTIGQGESALADKLEPLELPEGITIGYRSSMPHIEIKIFARGEKAIAVLPRVAGHIKMVLGTAVVAEDKATLAEEIHYKLLNSGLTLSVAESCTGGMITSQLVDFSGSSSYLQHGLVTYSNESKVRVLGVNPSTLDDHGAVSIATVEEMAKGARQILDSDYALATSGIAGPDGGTDEKPVGTVAIALATRGGVYSQMIKLPRRSRDLVRSLSAAVAYDMLRRELLAEAVIVDYQSIGRFSK.

This sequence belongs to the CinA family.

This chain is CinA-like protein, found in Shewanella baltica (strain OS155 / ATCC BAA-1091).